Consider the following 148-residue polypeptide: 3-hydroxyacyl-[acyl-carrier-protein] dehydratase FabZ (148 aa).

H49 is an active-site residue.

This sequence belongs to the thioester dehydratase family. FabZ subfamily.

The protein localises to the cytoplasm. The catalysed reaction is a (3R)-hydroxyacyl-[ACP] = a (2E)-enoyl-[ACP] + H2O. In terms of biological role, involved in unsaturated fatty acids biosynthesis. Catalyzes the dehydration of short chain beta-hydroxyacyl-ACPs and long chain saturated and unsaturated beta-hydroxyacyl-ACPs. In Ehrlichia canis (strain Jake), this protein is 3-hydroxyacyl-[acyl-carrier-protein] dehydratase FabZ.